The primary structure comprises 1210 residues: Epidermal growth factor receptor (1210 aa).

An N-terminal signal peptide occupies residues 1–24; it reads MRPSGTAGAALLALLAALCPASRA. Topologically, residues 25–645 are extracellular; sequence LEEKKVCQGT…CPTNGPKIPS (621 aa). C31 and C58 are disulfide-bonded. An N-linked (GlcNAc...) (complex) asparagine; atypical; partial glycan is attached at N56. N73 is a glycosylation site (N-linked (GlcNAc...) asparagine; atypical). The Approximate repeat unit spans residues 75 to 300; that stretch reads DLSFLKTIQE…CVKKCPRNYV (226 aa). N-linked (GlcNAc...) asparagine glycans are attached at residues N128, N175, and N196. Intrachain disulfides connect C157/C187, C190/C199, C194/C207, C215/C223, C219/C231, C232/C240, C236/C248, C251/C260, C264/C291, C295/C307, C311/C326, C329/C333, and C337/C362. At S229 the chain carries Phosphoserine. N352, N361, N413, and N444 each carry an N-linked (GlcNAc...) asparagine glycan. One copy of the Approximate repeat lies at 390-600; that stretch reads QELDILKTVK…CVKTCPAGVM (211 aa). 11 cysteine pairs are disulfide-bonded: C470-C499, C506-C515, C510-C523, C526-C535, C539-C555, C558-C571, C562-C579, C582-C591, C595-C617, C620-C628, and C624-C636. A glycan (N-linked (GlcNAc...) asparagine) is linked at N528. A glycan (N-linked (GlcNAc...) asparagine; partial) is linked at N568. N603 carries N-linked (GlcNAc...) asparagine; partial glycosylation. Residue N623 is glycosylated (N-linked (GlcNAc...) (high mannose) asparagine). Residues 646 to 668 form a helical membrane-spanning segment; that stretch reads IATGMVGALLLLLVVALGIGLFM. Over 669-1210 the chain is Cytoplasmic; it reads RRRHIVRKRT…APQSSEFIGA (542 aa). T678 carries the post-translational modification Phosphothreonine; by PKC and PKD/PRKD1. The important for dimerization, phosphorylation and activation stretch occupies residues 688–704; the sequence is LVEPLTPSGEAPNQALL. Position 693 is a phosphothreonine; by PKD/PRKD1 (T693). S695 carries the phosphoserine modification. The Protein kinase domain maps to 712–979; the sequence is FKKIKVLGSG…KMARDPQRYL (268 aa). Residue K716 forms a Glycyl lysine isopeptide (Lys-Gly) (interchain with G-Cter in ubiquitin) linkage. 718–726 provides a ligand contact to ATP; the sequence is LGSGAFGTV. K737 participates in a covalent cross-link: Glycyl lysine isopeptide (Lys-Gly) (interchain with G-Cter in ubiquitin). K745 provides a ligand contact to ATP. K745 is modified (N6-(2-hydroxyisobutyryl)lysine). Residues K754 and K757 each participate in a glycyl lysine isopeptide (Lys-Gly) (interchain with G-Cter in ubiquitin) cross-link. 790-791 serves as a coordination point for ATP; sequence TQ. D837 functions as the Proton acceptor in the catalytic mechanism. An ATP-binding site is contributed by D855. K867 is covalently cross-linked (Glycyl lysine isopeptide (Lys-Gly) (interchain with G-Cter in ubiquitin)). The residue at position 869 (Y869) is a Phosphotyrosine. Residues K929, K960, and K970 each participate in a glycyl lysine isopeptide (Lys-Gly) (interchain with G-Cter in ubiquitin) cross-link. Phosphoserine is present on residues S991 and S995. Y998 and Y1016 each carry phosphotyrosine; by autocatalysis. Residues S1026 and S1039 each carry the phosphoserine modification. At T1041 the chain carries Phosphothreonine. The residue at position 1042 (S1042) is a Phosphoserine. Residue C1049 is the site of S-palmitoyl cysteine attachment. Position 1064 is a phosphoserine (S1064). Y1069 is modified (phosphotyrosine). Residues S1070, S1071, and S1081 each carry the phosphoserine modification. 2 positions are modified to phosphotyrosine; by autocatalysis: Y1092 and Y1110. The disordered stretch occupies residues 1097–1137; that stretch reads VPKRPAGSVQNPVYHNQPLNPAPSRDPHYQDPHSTAVGNPE. Composition is skewed to polar residues over residues 1104-1115 and 1128-1137; these read SVQNPVYHNQPL and PHSTAVGNPE. A lipid anchor (S-palmitoyl cysteine) is attached at C1146. Position 1166 is a phosphoserine (S1166). Y1172 and Y1197 each carry phosphotyrosine; by autocatalysis. Residue R1199 is modified to Omega-N-methylarginine.

The protein belongs to the protein kinase superfamily. Tyr protein kinase family. EGF receptor subfamily. Binding of the ligand triggers homo- and/or heterodimerization of the receptor triggering its autophosphorylation. Heterodimer with ERBB2. Forms a complex with CCDC88A/GIV (via SH2-like regions) and GNAI3 which leads to enhanced EGFR signaling and triggering of cell migration; binding to CCDC88A requires autophosphorylation of the EGFR C-terminal region, and ligand stimulation is required for recruitment of GNAI3 to the complex. Interacts with ERRFI1; inhibits dimerization of the kinase domain and autophosphorylation. Part of a complex with ERBB2 and either PIK3C2A or PIK3C2B. Interacts with GRB2; an adapter protein coupling the receptor to downstream signaling pathways. Interacts with GAB2; involved in signaling downstream of EGFR. Interacts with STAT3; mediates EGFR downstream signaling in cell proliferation. Interacts with RIPK1; involved in NF-kappa-B activation. Interacts (autophosphorylated) with CBL, CBLB and CBLC; involved in EGFR ubiquitination and regulation; interaction with CBL is reduced in the presence of tensin TNS4. Interacts with SOCS5; regulates EGFR degradation through ELOC- and ELOB-mediated ubiquitination and proteasomal degradation. Interacts with PRMT5; methylates EGFR and enhances interaction with PTPN6. Interacts (phosphorylated) with PTPN6; inhibits EGFR-dependent activation of MAPK/ERK. Interacts with COPG1; essential for regulation of EGF-dependent nuclear transport of EGFR by retrograde trafficking from the Golgi to the ER. Interacts with TNK2; this interaction is dependent on EGF stimulation and kinase activity of EGFR. Interacts with PCNA; positively regulates PCNA. Interacts with PELP1. Interacts with MUC1. Interacts with AP2M1. Interacts with FER. May interact with EPS8; mediates EPS8 phosphorylation. Interacts (via SH2 domains) with GRB2, NCK1 and NCK2. Interacts with ATXN2. Interacts with GAREM1. Interacts (ubiquitinated) with ANKRD13A/B/D; the interaction is direct and may regulate EGFR internalization after EGF stimulation. Interacts with GPER1; the interaction occurs in an estrogen-dependent manner. Interacts (via C-terminal cytoplasmic kinase domain) with ZPR1 (via zinc fingers). Interacts with RNF115 and RNF126. Interacts with GPRC5A (via its transmembrane domain). Interacts with FAM83B; positively regulates EGFR inducing its autophosphorylation in absence of stimulation by EGF. Interacts with LAPTM4B; positively correlates with EGFR activation. Interacts with STX19. Interacts with CD44. Interacts with PGRMC1; the interaction requires PGRMC1 homodimerization. Interacts with PIKFYVE. Interacts with NEU3. Interacts with TRAF4. Interacts with the ant venom OMEGA-myrmeciitoxin(02)-Mg1a. Interacts with CD82; this interaction facilitates ligand-induced endocytosis of the receptor and its subsequent desensitization. Phosphorylated on Tyr residues in response to EGF. Phosphorylation at Ser-695 is partial and occurs only if Thr-693 is phosphorylated. Phosphorylation at Thr-678 and Thr-693 by PRKD1 inhibits EGF-induced MAPK8/JNK1 activation. Dephosphorylation by PTPRJ prevents endocytosis and stabilizes the receptor at the plasma membrane. Autophosphorylation at Tyr-1197 is stimulated by methylation at Arg-1199 and enhances interaction with PTPN6. Autophosphorylation at Tyr-1092 and/or Tyr-1110 recruits STAT3. Dephosphorylated by PTPN1 and PTPN2. In terms of processing, monoubiquitinated and polyubiquitinated upon EGF stimulation; which does not affect tyrosine kinase activity or signaling capacity but may play a role in lysosomal targeting. Polyubiquitin linkage is mainly through 'Lys-63', but linkage through 'Lys-48', 'Lys-11' and 'Lys-29' also occurs. Deubiquitination by OTUD7B prevents degradation. Ubiquitinated by RNF115 and RNF126. Ubiquitinated by ZNRF1 or CBL at different lysines in response to EGF stimulation; leading to recruitment of the ESCRT machinery and subsequent degradation in the lysosomes. Deubiquitinated by UCHL1 leading to the inhibition of its degradation. Post-translationally, palmitoylated on Cys residues by ZDHHC20. Palmitoylation inhibits internalization after ligand binding, and increases the persistence of tyrosine-phosphorylated EGFR at the cell membrane. Palmitoylation increases the amplitude and duration of EGFR signaling. Methylated. Methylation at Arg-1199 by PRMT5 stimulates phosphorylation at Tyr-1197. Ubiquitously expressed. Isoform 2 is also expressed in ovarian cancers.

It is found in the cell membrane. It localises to the endoplasmic reticulum membrane. The protein resides in the golgi apparatus membrane. The protein localises to the nucleus membrane. Its subcellular location is the endosome. It is found in the endosome membrane. It localises to the nucleus. The protein resides in the secreted. It carries out the reaction L-tyrosyl-[protein] + ATP = O-phospho-L-tyrosyl-[protein] + ADP + H(+). Its activity is regulated as follows. Endocytosis and inhibition of the activated EGFR by phosphatases like PTPRJ and PTPRK constitute immediate regulatory mechanisms. Upon EGF-binding phosphorylates EPS15 that regulates EGFR endocytosis and activity. Moreover, inducible feedback inhibitors including LRIG1, SOCS4, SOCS5 and ERRFI1 constitute alternative regulatory mechanisms for the EGFR signaling. Up-regulated by NEU3-mediated desialylation of N-linked glycan at Asn-528. Functionally, receptor tyrosine kinase binding ligands of the EGF family and activating several signaling cascades to convert extracellular cues into appropriate cellular responses. Known ligands include EGF, TGFA/TGF-alpha, AREG, epigen/EPGN, BTC/betacellulin, epiregulin/EREG and HBEGF/heparin-binding EGF. Ligand binding triggers receptor homo- and/or heterodimerization and autophosphorylation on key cytoplasmic residues. The phosphorylated receptor recruits adapter proteins like GRB2 which in turn activates complex downstream signaling cascades. Activates at least 4 major downstream signaling cascades including the RAS-RAF-MEK-ERK, PI3 kinase-AKT, PLCgamma-PKC and STATs modules. May also activate the NF-kappa-B signaling cascade. Also directly phosphorylates other proteins like RGS16, activating its GTPase activity and probably coupling the EGF receptor signaling to the G protein-coupled receptor signaling. Also phosphorylates MUC1 and increases its interaction with SRC and CTNNB1/beta-catenin. Positively regulates cell migration via interaction with CCDC88A/GIV which retains EGFR at the cell membrane following ligand stimulation, promoting EGFR signaling which triggers cell migration. Plays a role in enhancing learning and memory performance. Plays a role in mammalian pain signaling (long-lasting hypersensitivity). In terms of biological role, isoform 2 may act as an antagonist of EGF action. (Microbial infection) Acts as a receptor for hepatitis C virus (HCV) in hepatocytes and facilitates its cell entry. Mediates HCV entry by promoting the formation of the CD81-CLDN1 receptor complexes that are essential for HCV entry and by enhancing membrane fusion of cells expressing HCV envelope glycoproteins. This is Epidermal growth factor receptor from Homo sapiens (Human).